The chain runs to 508 residues: MEEIQRYLQLDRSQQHDFLYPLIFQEYIYAFAHDRGFGRSILSENPGYDKKSSLLIVKRLITRMYQQNHFIGSTNDSNQNPFLGRNKNLYYQIISEGFAFIVEIPFSLRLISSREGKNKKIVKSQNLRSIHSIFPFLEDNFSHLNFVLDILIPYPVHVEVLVQTLRYWVKDASSLHLVRFFLNEYCNWNSLILPKKASFSCSKINQRLFLFLYNSHVCEYESIFVFLRNQSSHLLSTSSGVLLERIYFYGKIECLVNVFVKVKDFQANLWLVKEPCMHYVRYQRKSILASKGTFLLIKKWKCYLMTFWQWHFLLWFQPRRIYINQLSNHFLEFLGYLSNVRMNPAVVRSQILENSFLMNNSIKKFDTLVPISPLIASLAKAKFCNVLGHPISKPVRADLSDSNIIDRFGHICRNLSHYHSGSFKKKSLYRIKYILRLSCARTLARKHKSTVRAFLKRLGSDLLEEFLMSEEDVLSLTFPKASSTLRGGYKSRIWYLDIIYINDLANYK.

Belongs to the intron maturase 2 family. MatK subfamily.

The protein localises to the plastid. It localises to the chloroplast. Its function is as follows. Usually encoded in the trnK tRNA gene intron. Probably assists in splicing its own and other chloroplast group II introns. This is Maturase K from Antirrhinum majus (Garden snapdragon).